Here is a 319-residue protein sequence, read N- to C-terminus: Acetyl-coenzyme A carboxylase carboxyl transferase subunit alpha (319 aa).

Residues 35–296 (NIDEEVHRLR…KAQLLADLAD (262 aa)) enclose the CoA carboxyltransferase C-terminal domain.

It belongs to the AccA family. As to quaternary structure, acetyl-CoA carboxylase is a heterohexamer composed of biotin carboxyl carrier protein (AccB), biotin carboxylase (AccC) and two subunits each of ACCase subunit alpha (AccA) and ACCase subunit beta (AccD).

The protein localises to the cytoplasm. The enzyme catalyses N(6)-carboxybiotinyl-L-lysyl-[protein] + acetyl-CoA = N(6)-biotinyl-L-lysyl-[protein] + malonyl-CoA. It participates in lipid metabolism; malonyl-CoA biosynthesis; malonyl-CoA from acetyl-CoA: step 1/1. Functionally, component of the acetyl coenzyme A carboxylase (ACC) complex. First, biotin carboxylase catalyzes the carboxylation of biotin on its carrier protein (BCCP) and then the CO(2) group is transferred by the carboxyltransferase to acetyl-CoA to form malonyl-CoA. This is Acetyl-coenzyme A carboxylase carboxyl transferase subunit alpha from Escherichia coli O127:H6 (strain E2348/69 / EPEC).